We begin with the raw amino-acid sequence, 332 residues long: Invasin IpaD (332 aa).

Over residues 1 to 25 (MNITTLTNSISTSSFSPNNTNGSST) the composition is skewed to low complexity. Residues 1 to 43 (MNITTLTNSISTSSFSPNNTNGSSTETVNSDIKTTTSSHPVSS) are disordered. Over residues 26–43 (ETVNSDIKTTTSSHPVSS) the composition is skewed to polar residues. Positions 44-77 (LTMLNDTLHNIRTTNQALKKELSQKTLTKTSLEE) form a coiled coil. The segment at 192-267 (VKSLKDALTT…NRLDNLGGNG (76 aa)) is ipaB binding.

The protein belongs to the invasin protein D family.

The protein localises to the secreted. Functionally, required for bacterial invasion of host cells. Controls IpaB and IpaC secretion, and the efficiency with which they are physically inserted into target cell membranes. These proteins are exported via T3SS to form a pore in the host membrane that allows the translocation of the other effectors into the host cytoplasm. Along with IpaB, is essential for both blocking secretion through the Mxi/Spa translocon in the absence of a secretion-inducing signal, and for controlling the level of secretion in the presence of this signal. This is Invasin IpaD (ipaD) from Shigella dysenteriae.